Here is a 904-residue protein sequence, read N- to C-terminus: Disintegrin and metalloproteinase domain-containing protein 22 (904 aa).

A signal peptide spans 1–23 (MQAAAAASFWLLCVLGTCPLARC). Positions 24–223 (GRAGVASLKG…LKPRLKRRKR (200 aa)) are excised as a propeptide. The Extracellular portion of the chain corresponds to 24–734 (GRAGVASLKG…LSGNGVAGTN (711 aa)). Asn163 is a glycosylation site (N-linked (GlcNAc...) asparagine). A Peptidase M12B domain is found at 237–436 (KYIELMIVND…GGGACLFNKP (200 aa)). Cystine bridges form between Cys347–Cys431, Cys390–Cys415, Cys392–Cys399, Cys445–Cys475, Cys456–Cys472, Cys458–Cys464, Cys471–Cys492, Cys483–Cys489, Cys488–Cys514, Cys501–Cys521, Cys508–Cys540, Cys533–Cys545, Cys552–Cys603, Cys567–Cys633, Cys581–Cys591, Cys598–Cys661, and Cys655–Cys666. Residues 442 to 529 (PPECGNGFIE…QCAPNVHKMD (88 aa)) enclose the Disintegrin domain. Asn517 is a glycosylation site (N-linked (GlcNAc...) asparagine). N-linked (GlcNAc...) asparagine glycosylation occurs at Asn632. Asn673 is a glycosylation site (N-linked (GlcNAc...) asparagine). Residues 673 to 710 (NFSTCSSSKAGTVCSGNGVCSNELKCVCNRHWTGADCG) enclose the EGF-like domain. 3 cysteine pairs are disulfide-bonded: Cys677–Cys692, Cys686–Cys698, and Cys700–Cys709. The chain crosses the membrane as a helical span at residues 735 to 755 (IIIGIIAGTILVLALILGITA). Residues 756–857 (WGYKNYREQR…RFRPRSNSTE (102 aa)) are Cytoplasmic-facing. Residues 769–904 (QGDYVKKPGD…QSARLWETSI (136 aa)) form a disordered region. Positions 789-808 (GGSTNSASSSKKRSNGLSHS) are enriched in low complexity. 3 positions are modified to phosphoserine: Ser808, Lys817, and Ser832. Over residues 809-827 (WSERIPDTKHISDICENGR) the composition is skewed to basic and acidic residues. Residues 840–851 (NKKKIRGKRFRP) show a composition bias toward basic residues. Phosphoserine occurs at positions 855, 860, 864, 868, and 882. The span at 860-875 (SPAKSPSSSTGSIASS) shows a compositional bias: low complexity.

In terms of assembly, interacts with LGI1. Can bind to LGI4. Interacts with KCNA2, DLG2 and DLG4. Interacts with ADAM11. Interacts (via C-terminus) with YWHAB/14-3-3 beta. Interacts (via C-terminus) with YWHAZ/14-3-3 zeta. In terms of processing, the precursor is cleaved by a furin endopeptidase. As to expression, detected in juxtaparanodal zones in the central nervous system and at nerve terminal plexuses of basket cells in the cerebellum (at protein level). Expressed at high levels in the brain. Strongly expressed in cerebellar granule cells and hippocampus. In spinal cord, expression is restricted to gray matter.

It localises to the cell membrane. The protein localises to the cell projection. Its subcellular location is the axon. Probable ligand for integrin in the brain. This is a non catalytic metalloprotease-like protein. Involved in regulation of cell adhesion and spreading and in inhibition of cell proliferation. Neuronal receptor for LGI1. The chain is Disintegrin and metalloproteinase domain-containing protein 22 (Adam22) from Mus musculus (Mouse).